A 276-amino-acid chain; its full sequence is Octanoyltransferase LipM (276 aa).

Residues 32–247 enclose the BPL/LPL catalytic domain; that stretch reads GEIDPVIRFY…GFKKGLNIEL (216 aa). The active-site Acyl-thioester intermediate is cysteine 149.

The protein belongs to the octanoyltransferase LipM family. As to quaternary structure, monomer.

It carries out the reaction octanoyl-[ACP] + L-lysyl-[protein] = N(6)-octanoyl-L-lysyl-[protein] + holo-[ACP] + H(+). It participates in protein modification; protein lipoylation via endogenous pathway; protein N(6)-(lipoyl)lysine from octanoyl-[acyl-carrier-protein]. In terms of biological role, catalyzes the transfer of endogenously produced octanoic acid from octanoyl-acyl-carrier-protein onto the lipoyl domain of GcvH, an intermediate carrier during protein lipoylation. In Staphylococcus aureus (strain NCTC 8325 / PS 47), this protein is Octanoyltransferase LipM.